Here is a 1074-residue protein sequence, read N- to C-terminus: Collagen, type I, alpha 1a (1074 aa).

Residues 1-13 (KSPAMPVPGPMGP) are compositionally biased toward pro residues. Residues 1–1010 (KSPAMPVPGP…PQEKAPDPYR (1010 aa)) form a disordered region. Low complexity predominate over residues 14 to 36 (MGPRSGPQGFPGEAGAAGAMGPR). The span at 45–59 (NGEDGESGKPGRGGE) shows a compositional bias: basic and acidic residues. The span at 129-147 (TGAAGAAGARGNDGAAGAA) shows a compositional bias: low complexity. Pro residues predominate over residues 149 to 162 (PPGPTGPAGPPGFP). The segment covering 163–181 (GGPGAKGDAGAQGGRGPEG) has biased composition (gly residues). Low complexity-rich tracts occupy residues 182-225 (PAGA…AGAP), 234-272 (SGPQ…APGV), and 290-299 (EPGAAGARGA). Positions 301-313 (GERGGPGGRGFPG) are enriched in gly residues. Low complexity-rich tracts occupy residues 377–392 (VGAR…PGPK), 469–530 (VPGE…QGMP), and 563–578 (RGLT…AGAT). The segment covering 588-597 (GPVGPGGARG) has biased composition (gly residues). Low complexity-rich tracts occupy residues 611 to 647 (AGFA…AGPT) and 661 to 683 (PKGA…AGRV). Residues 685–697 (PPGPSGNPGPPGP) are compositionally biased toward pro residues. Composition is skewed to low complexity over residues 715-742 (PAGR…SEGA) and 803-823 (PGLA…SEGS). The span at 847 to 857 (APGPPGAPGPV) shows a compositional bias: pro residues. Positions 871-890 (PAGPAGSAGPAGPRGPAGAP) are enriched in low complexity. Basic and acidic residues predominate over residues 893-907 (RGDKGESGEAGERGH). The segment covering 920–956 (SGSSGEQGPAGAAGPAGPRGPAGSAGSPGKDGMSGLP) has biased composition (low complexity). A compositionally biased stretch (pro residues) spans 974 to 986 (AGPPGPPGPPGAP). The Fibrillar collagen NC1 domain maps to 1014–1074 (LEVDSTLKSL…GLEVGPVCFL (61 aa)).

The protein belongs to the fibrillar collagen family.

It is found in the secreted. It localises to the extracellular space. The protein localises to the extracellular matrix. In Epinephelus marginatus (Dusky grouper), this protein is Collagen, type I, alpha 1a.